The primary structure comprises 617 residues: Acetolactate synthase large subunit (617 aa).

Glu-71 lines the thiamine diphosphate pocket. FAD is bound by residues Arg-173, 281–302, and 324–343; these read HGTAYANFAVTECDLLIAVGAR and EIDPAEIGKNRKADVAVLGD. Positions 413–492 are thiamine pyrophosphate binding; that stretch reads QHQMWAAQHL…VKVVIVNNHW (80 aa). Asp-463 and Asn-490 together coordinate Mg(2+).

The protein belongs to the TPP enzyme family. As to quaternary structure, dimer of large and small chains. Requires Mg(2+) as cofactor. The cofactor is thiamine diphosphate.

It catalyses the reaction 2 pyruvate + H(+) = (2S)-2-acetolactate + CO2. It participates in amino-acid biosynthesis; L-isoleucine biosynthesis; L-isoleucine from 2-oxobutanoate: step 1/4. The protein operates within amino-acid biosynthesis; L-valine biosynthesis; L-valine from pyruvate: step 1/4. The sequence is that of Acetolactate synthase large subunit (ilvB) from Parasynechococcus marenigrum (strain WH8102).